Reading from the N-terminus, the 476-residue chain is mRNA cap guanine-N(7) methyltransferase (476 aa).

Over residues 1 to 14 the composition is skewed to basic and acidic residues; it reads MANSAKAEEYEKMS. The tract at residues 1–146 is disordered; it reads MANSAKAEEY…KQKNLEEGHS (146 aa). Polar residues predominate over residues 20–50; it reads ASVNSETESSFNINENTTASGTGLSEKTSVC. Phosphoserine occurs at positions 24, 28, and 29. Basic and acidic residues-rich tracts occupy residues 54–68 and 84–118; these read DIAR…DLVK and LDPE…DKSS. Serine 118 bears the Phosphoserine mark. Residues 126-128 carry the Nuclear localization signal motif; it reads KRK. Residues 129-145 show a composition bias toward basic and acidic residues; sequence IALEDVPEKQKNLEEGH. An mRNA cap 0 methyltransferase domain is found at 167–475; the sequence is SRIFYLRNFN…IYLVFAFEKQ (309 aa). Residue 176–177 coordinates mRNA; sequence NN. 6 residues coordinate S-adenosyl-L-methionine: lysine 180, glycine 205, aspartate 227, aspartate 261, glutamine 284, and tyrosine 289.

Belongs to the class I-like SAM-binding methyltransferase superfamily. mRNA cap 0 methyltransferase family. Interacts with importin alpha, leading to stimulate both RNA-binding and methyltransferase activity. Interaction with importin alpha and beta is required for its nuclear localization, importin beta dissociating in response to RanGTP, allowing RNMT-importin alpha to bind RNA substrates. Interacts with elongating form of polymerase II and RNGTT. Interacts with RAMAC, this interaction significantly enhances RNA-binding and cap methyltransferase activity. In terms of tissue distribution, widely expressed.

Its subcellular location is the nucleus. The catalysed reaction is a 5'-end (5'-triphosphoguanosine)-ribonucleoside in mRNA + S-adenosyl-L-methionine = a 5'-end (N(7)-methyl 5'-triphosphoguanosine)-ribonucleoside in mRNA + S-adenosyl-L-homocysteine. Its activity is regulated as follows. Methyltransferase activity is activated by RAMAC. In terms of biological role, catalytic subunit of the mRNA-capping methyltransferase RNMT:RAMAC complex that methylates the N7 position of the added guanosine to the 5'-cap structure of mRNAs. Binds RNA containing 5'-terminal GpppC. The protein is mRNA cap guanine-N(7) methyltransferase (RNMT) of Homo sapiens (Human).